The sequence spans 441 residues: Histidinol dehydrogenase (441 aa).

NAD(+) contacts are provided by tyrosine 136, glutamine 197, and asparagine 220. 3 residues coordinate substrate: serine 243, glutamine 265, and histidine 268. Residues glutamine 265 and histidine 268 each coordinate Zn(2+). Active-site proton acceptor residues include glutamate 333 and histidine 334. The substrate site is built by histidine 334, aspartate 367, glutamate 421, and histidine 426. Aspartate 367 is a Zn(2+) binding site. Histidine 426 is a binding site for Zn(2+).

This sequence belongs to the histidinol dehydrogenase family. Zn(2+) serves as cofactor.

It catalyses the reaction L-histidinol + 2 NAD(+) + H2O = L-histidine + 2 NADH + 3 H(+). Its pathway is amino-acid biosynthesis; L-histidine biosynthesis; L-histidine from 5-phospho-alpha-D-ribose 1-diphosphate: step 9/9. Its function is as follows. Catalyzes the sequential NAD-dependent oxidations of L-histidinol to L-histidinaldehyde and then to L-histidine. The sequence is that of Histidinol dehydrogenase from Pseudomonas fluorescens (strain Pf0-1).